Reading from the N-terminus, the 439-residue chain is Polygalacturonase QRT2 (439 aa).

The N-terminal stretch at 1–21 (MYEKIIILSVFLLTFLPSCFS) is a signal peptide. Residues 43-69 (RQHQHGHNTRNSHLKNRHGYAPRSSPR) are disordered. The span at 44-62 (QHQHGHNTRNSHLKNRHGY) shows a compositional bias: basic residues. 2 PbH1 repeats span residues 201–250 (CNNL…HVSG) and 251–272 (TQNILIQDSIVRTGDDCISIVS). Catalysis depends on aspartate 265, which acts as the Proton donor. Residue histidine 288 is part of the active site. PbH1 repeat units lie at residues 304 to 325 (VSNVVVNKATLIGTTNGVRIKT) and 333 to 354 (AKNIIFQDIIMKNVTNPIIINQ).

Belongs to the glycosyl hydrolase 28 family. Expressed predominantly in roots with lower expression levels in rosette leaves, flower buds and siliques. Bearly detected in seeds. Found in flowers undergoing floral organ abscission. Also expressed early in anther development, at the time of microspore separation.

The protein localises to the secreted. It localises to the cell wall. It catalyses the reaction (1,4-alpha-D-galacturonosyl)n+m + H2O = (1,4-alpha-D-galacturonosyl)n + (1,4-alpha-D-galacturonosyl)m.. Polygalacturonase required for cell type-specific pectin degradation to separate microspores. Involved in anther dehiscence and floral organ abscission. The polypeptide is Polygalacturonase QRT2 (QRT2) (Arabidopsis thaliana (Mouse-ear cress)).